The chain runs to 155 residues: MKIQLIAVGTKMPVWVKNGFEEYQRRFPKDMPFELIEIAAGKLGKNADIKRILEQEGKAMLAAAGKAKIVSLDIPGKPWTTEQLATQLESWKSDGRDICLLIGGPEGLSTECKQAAEQSWSLSPLTLPHPLVRVIVAESLYRAWSLTTNHPYHRE.

Residues L72, G103, and 122–127 (LSPLTL) contribute to the S-adenosyl-L-methionine site.

This sequence belongs to the RNA methyltransferase RlmH family. As to quaternary structure, homodimer.

The protein resides in the cytoplasm. The catalysed reaction is pseudouridine(1915) in 23S rRNA + S-adenosyl-L-methionine = N(3)-methylpseudouridine(1915) in 23S rRNA + S-adenosyl-L-homocysteine + H(+). Functionally, specifically methylates the pseudouridine at position 1915 (m3Psi1915) in 23S rRNA. The polypeptide is Ribosomal RNA large subunit methyltransferase H (Haemophilus ducreyi (strain 35000HP / ATCC 700724)).